Consider the following 431-residue polypeptide: Phosphoribosylamine--glycine ligase (431 aa).

In terms of domain architecture, ATP-grasp spans 107–315 (RWLMEEYKIP…LVEIGEEIVD (209 aa)). Residue 134-193 (IDDFGRPVVVKPLGLTGGKGVKVVGYQLKDNEEAKAYAEELIKRDGKVLIEERTDGVEFT) participates in ATP binding. Residues glutamine 273, glutamate 285, and asparagine 287 each coordinate Mg(2+). Mn(2+) is bound by residues glutamine 273, glutamate 285, and asparagine 287.

The protein belongs to the GARS family. The cofactor is Mg(2+). Requires Mn(2+) as cofactor.

The catalysed reaction is 5-phospho-beta-D-ribosylamine + glycine + ATP = N(1)-(5-phospho-beta-D-ribosyl)glycinamide + ADP + phosphate + H(+). The protein operates within purine metabolism; IMP biosynthesis via de novo pathway; N(1)-(5-phospho-D-ribosyl)glycinamide from 5-phospho-alpha-D-ribose 1-diphosphate: step 2/2. The sequence is that of Phosphoribosylamine--glycine ligase from Thermococcus kodakarensis (strain ATCC BAA-918 / JCM 12380 / KOD1) (Pyrococcus kodakaraensis (strain KOD1)).